A 151-amino-acid polypeptide reads, in one-letter code: Probable desiccation-related protein LEA14 (151 aa).

It belongs to the LEA type 2 family.

The sequence is that of Probable desiccation-related protein LEA14 (LEA14) from Arabidopsis thaliana (Mouse-ear cress).